The chain runs to 311 residues: Maspardin (311 aa).

The AB hydrolase-1 domain occupies 86-159 (EFCDGFRKLL…NSFWLMPSFM (74 aa)).

The protein belongs to the AB hydrolase superfamily.

Its subcellular location is the cytoplasm. This chain is Maspardin (spg21), found in Danio rerio (Zebrafish).